The chain runs to 164 residues: Large ribosomal subunit protein uL15 (164 aa).

The disordered stretch occupies residues 1-52 (MSLSKLKAPKGANRERTRVGRGQGSGLGKTAGRGGKGQKARSGNMHFEGFEG). A compositionally biased stretch (gly residues) spans 21-37 (RGQGSGLGKTAGRGGKG).

It belongs to the universal ribosomal protein uL15 family. As to quaternary structure, part of the 50S ribosomal subunit.

Functionally, binds to the 23S rRNA. The polypeptide is Large ribosomal subunit protein uL15 (Anaeromyxobacter sp. (strain Fw109-5)).